We begin with the raw amino-acid sequence, 319 residues long: Tetrahydromethanopterin S-methyltransferase subunit H (319 aa).

The protein belongs to the MtrH family. The complex is composed of 8 subunits; MtrA, MtrB, MtrC, MtrD, MtrE, MtrF, MtrG and MtrH.

The enzyme catalyses 5-methyl-5,6,7,8-tetrahydromethanopterin + coenzyme M + 2 Na(+)(in) = 5,6,7,8-tetrahydromethanopterin + methyl-coenzyme M + 2 Na(+)(out). The protein operates within one-carbon metabolism; methanogenesis from CO(2); methyl-coenzyme M from 5,10-methylene-5,6,7,8-tetrahydromethanopterin: step 2/2. Part of a complex that catalyzes the formation of methyl-coenzyme M and tetrahydromethanopterin from coenzyme M and methyl-tetrahydromethanopterin. This is an energy-conserving, sodium-ion translocating step. MtrH catalyzes the transfer of the methyl group from methyl-tetrahydromethanopterin to the corrinoid prosthetic group of MtrA. This is Tetrahydromethanopterin S-methyltransferase subunit H from Methanococcus vannielii (strain ATCC 35089 / DSM 1224 / JCM 13029 / OCM 148 / SB).